The sequence spans 96 residues: Large ribosomal subunit protein bL28 (96 aa).

Residues 1-23 (MSRVCELSGKAPMTGNTVSHANN) are disordered.

This sequence belongs to the bacterial ribosomal protein bL28 family.

The chain is Large ribosomal subunit protein bL28 from Cereibacter sphaeroides (strain ATCC 17029 / ATH 2.4.9) (Rhodobacter sphaeroides).